Consider the following 199-residue polypeptide: dTTP/UTP pyrophosphatase (199 aa).

The Proton acceptor role is filled by D79.

Belongs to the Maf family. YhdE subfamily. A divalent metal cation is required as a cofactor.

It is found in the cytoplasm. It catalyses the reaction dTTP + H2O = dTMP + diphosphate + H(+). The catalysed reaction is UTP + H2O = UMP + diphosphate + H(+). Functionally, nucleoside triphosphate pyrophosphatase that hydrolyzes dTTP and UTP. May have a dual role in cell division arrest and in preventing the incorporation of modified nucleotides into cellular nucleic acids. The sequence is that of dTTP/UTP pyrophosphatase from Porphyromonas gingivalis (strain ATCC 33277 / DSM 20709 / CIP 103683 / JCM 12257 / NCTC 11834 / 2561).